A 283-amino-acid polypeptide reads, in one-letter code: Thymidylate synthase (283 aa).

Residue Arg22 coordinates dUMP. Cys160 functions as the Nucleophile in the catalytic mechanism. DUMP contacts are provided by residues 180–183, Asn191, and 221–223; these read RSCD and HIY. Asp183 provides a ligand contact to (6R)-5,10-methylene-5,6,7,8-tetrahydrofolate. (6R)-5,10-methylene-5,6,7,8-tetrahydrofolate is bound at residue Ser282.

It belongs to the thymidylate synthase family. Bacterial-type ThyA subfamily. As to quaternary structure, homodimer.

The protein resides in the cytoplasm. It catalyses the reaction dUMP + (6R)-5,10-methylene-5,6,7,8-tetrahydrofolate = 7,8-dihydrofolate + dTMP. It participates in pyrimidine metabolism; dTTP biosynthesis. Catalyzes the reductive methylation of 2'-deoxyuridine-5'-monophosphate (dUMP) to 2'-deoxythymidine-5'-monophosphate (dTMP) while utilizing 5,10-methylenetetrahydrofolate (mTHF) as the methyl donor and reductant in the reaction, yielding dihydrofolate (DHF) as a by-product. This enzymatic reaction provides an intracellular de novo source of dTMP, an essential precursor for DNA biosynthesis. This is Thymidylate synthase from Aliivibrio fischeri (strain ATCC 700601 / ES114) (Vibrio fischeri).